The sequence spans 101 residues: Large ribosomal subunit protein uL24 (101 aa).

Belongs to the universal ribosomal protein uL24 family. As to quaternary structure, part of the 50S ribosomal subunit.

In terms of biological role, one of two assembly initiator proteins, it binds directly to the 5'-end of the 23S rRNA, where it nucleates assembly of the 50S subunit. One of the proteins that surrounds the polypeptide exit tunnel on the outside of the subunit. This Ruegeria sp. (strain TM1040) (Silicibacter sp.) protein is Large ribosomal subunit protein uL24.